Here is a 333-residue protein sequence, read N- to C-terminus: Probable tRNA pseudouridine synthase B (333 aa).

Catalysis depends on D71, which acts as the Nucleophile. In terms of domain architecture, PUA spans 238–313 (LPKIWVRDSA…LVARTDRVVM (76 aa)).

The protein belongs to the pseudouridine synthase TruB family. Type 2 subfamily.

The enzyme catalyses uridine(55) in tRNA = pseudouridine(55) in tRNA. In terms of biological role, could be responsible for synthesis of pseudouridine from uracil-55 in the psi GC loop of transfer RNAs. The sequence is that of Probable tRNA pseudouridine synthase B from Pyrobaculum calidifontis (strain DSM 21063 / JCM 11548 / VA1).